A 352-amino-acid chain; its full sequence is Molybdenum import ATP-binding protein ModC (352 aa).

In terms of domain architecture, ABC transporter spans 1-229; the sequence is MLELNFSQTL…SVMHPWLPKE (229 aa). 31 to 38 provides a ligand contact to ATP; it reads GVSGAGKT. The Mop domain maps to 289–352; it reads QTSIRNVLRA…AQVKSVSITA (64 aa).

The protein belongs to the ABC transporter superfamily. Molybdate importer (TC 3.A.1.8) family. In terms of assembly, the complex is composed of two ATP-binding proteins (ModC), two transmembrane proteins (ModB) and a solute-binding protein (ModA).

It is found in the cell inner membrane. It carries out the reaction molybdate(out) + ATP + H2O = molybdate(in) + ADP + phosphate + H(+). In terms of biological role, part of the ABC transporter complex ModABC involved in molybdenum import. Responsible for energy coupling to the transport system. The sequence is that of Molybdenum import ATP-binding protein ModC from Salmonella typhi.